Consider the following 132-residue polypeptide: Small ribosomal subunit protein uS8 (132 aa).

Belongs to the universal ribosomal protein uS8 family. Part of the 30S ribosomal subunit. Contacts proteins S5 and S12.

In terms of biological role, one of the primary rRNA binding proteins, it binds directly to 16S rRNA central domain where it helps coordinate assembly of the platform of the 30S subunit. The chain is Small ribosomal subunit protein uS8 from Psychrobacter cryohalolentis (strain ATCC BAA-1226 / DSM 17306 / VKM B-2378 / K5).